The following is a 591-amino-acid chain: Pyruvate kinase 2 (591 aa).

Arginine 38 contacts substrate. Positions 40, 42, and 72 each coordinate K(+). Asparagine 40–histidine 43 is a binding site for ATP. Residues arginine 79 and lysine 164 each coordinate ATP. Residue glutamate 229 coordinates Mg(2+). Positions 252, 253, and 285 each coordinate substrate. Aspartate 253 contacts Mg(2+).

This sequence belongs to the pyruvate kinase family. It in the C-terminal section; belongs to the PEP-utilizing enzyme family. Homotetramer. It depends on Mg(2+) as a cofactor. The cofactor is K(+).

The enzyme catalyses pyruvate + ATP = phosphoenolpyruvate + ADP + H(+). It functions in the pathway carbohydrate degradation; glycolysis; pyruvate from D-glyceraldehyde 3-phosphate: step 5/5. The polypeptide is Pyruvate kinase 2 (pyk2) (Synechocystis sp. (strain ATCC 27184 / PCC 6803 / Kazusa)).